A 209-amino-acid chain; its full sequence is Orotate phosphoribosyltransferase (209 aa).

Residues Arg-96, Lys-100, His-102, and 122 to 130 contribute to the 5-phospho-alpha-D-ribose 1-diphosphate site; that span reads EDLISTGGS. Ser-126 contacts orotate.

It belongs to the purine/pyrimidine phosphoribosyltransferase family. PyrE subfamily. Homodimer. It depends on Mg(2+) as a cofactor.

The catalysed reaction is orotidine 5'-phosphate + diphosphate = orotate + 5-phospho-alpha-D-ribose 1-diphosphate. The protein operates within pyrimidine metabolism; UMP biosynthesis via de novo pathway; UMP from orotate: step 1/2. Functionally, catalyzes the transfer of a ribosyl phosphate group from 5-phosphoribose 1-diphosphate to orotate, leading to the formation of orotidine monophosphate (OMP). This chain is Orotate phosphoribosyltransferase, found in Streptococcus pyogenes serotype M2 (strain MGAS10270).